Here is a 479-residue protein sequence, read N- to C-terminus: Aspartyl/glutamyl-tRNA(Asn/Gln) amidotransferase subunit B (479 aa).

Belongs to the GatB/GatE family. GatB subfamily. Heterotrimer of A, B and C subunits.

It carries out the reaction L-glutamyl-tRNA(Gln) + L-glutamine + ATP + H2O = L-glutaminyl-tRNA(Gln) + L-glutamate + ADP + phosphate + H(+). It catalyses the reaction L-aspartyl-tRNA(Asn) + L-glutamine + ATP + H2O = L-asparaginyl-tRNA(Asn) + L-glutamate + ADP + phosphate + 2 H(+). Its function is as follows. Allows the formation of correctly charged Asn-tRNA(Asn) or Gln-tRNA(Gln) through the transamidation of misacylated Asp-tRNA(Asn) or Glu-tRNA(Gln) in organisms which lack either or both of asparaginyl-tRNA or glutaminyl-tRNA synthetases. The reaction takes place in the presence of glutamine and ATP through an activated phospho-Asp-tRNA(Asn) or phospho-Glu-tRNA(Gln). This Streptococcus pyogenes serotype M49 (strain NZ131) protein is Aspartyl/glutamyl-tRNA(Asn/Gln) amidotransferase subunit B.